The sequence spans 122 residues: Large ribosomal subunit protein uL14 (122 aa).

This sequence belongs to the universal ribosomal protein uL14 family. In terms of assembly, part of the 50S ribosomal subunit. Forms a cluster with proteins L3 and L19. In the 70S ribosome, L14 and L19 interact and together make contacts with the 16S rRNA in bridges B5 and B8.

Functionally, binds to 23S rRNA. Forms part of two intersubunit bridges in the 70S ribosome. The chain is Large ribosomal subunit protein uL14 from Protochlamydia amoebophila (strain UWE25).